The following is a 267-amino-acid chain: Tryptophan synthase alpha chain (267 aa).

Catalysis depends on proton acceptor residues Glu43 and Asp54.

It belongs to the TrpA family. Tetramer of two alpha and two beta chains.

The enzyme catalyses (1S,2R)-1-C-(indol-3-yl)glycerol 3-phosphate + L-serine = D-glyceraldehyde 3-phosphate + L-tryptophan + H2O. Its pathway is amino-acid biosynthesis; L-tryptophan biosynthesis; L-tryptophan from chorismate: step 5/5. Its function is as follows. The alpha subunit is responsible for the aldol cleavage of indoleglycerol phosphate to indole and glyceraldehyde 3-phosphate. The protein is Tryptophan synthase alpha chain of Bacillus pumilus (strain SAFR-032).